Reading from the N-terminus, the 160-residue chain is Nucleotide-binding protein Patl_4311 (160 aa).

It belongs to the YajQ family.

Its function is as follows. Nucleotide-binding protein. This Pseudoalteromonas atlantica (strain T6c / ATCC BAA-1087) protein is Nucleotide-binding protein Patl_4311.